Consider the following 191-residue polypeptide: C-type lectin domain family 2 member D (191 aa).

Residues 1–38 (MHDSNNVEKDITPSELPANPGCLHSKEHSIKATLIWRL) lie on the Cytoplasmic side of the membrane. A helical; Signal-anchor for type II membrane protein membrane pass occupies residues 39 to 59 (FFLIMFLTIIVCGMVAALSAI). At 60 to 191 (RANCHQEPSV…WICSKSDIHV (132 aa)) the chain is on the extracellular side. A disulfide bridge links C75 with C86. The region spanning 82-185 (FQRKCFYFSD…HYTERKWICS (104 aa)) is the C-type lectin domain. N-linked (GlcNAc...) asparagine glycans are attached at residues N95 and N147. A disulfide bond links C103 and C184.

As to quaternary structure, homodimer; disulfide-linked. Post-translationally, N-glycosylated. As to expression, detected in peripheral blood leukocytes, osteoblasts, lymph node, thymus and spleen. Isoform 1, isoform 2 and isoform 4 are expressed in T- and B-lymphocytes, and at lower levels in NK cells. They are also expressed in B-cell lines and LPS-matured monocyte-derived dendritic cells.

The protein localises to the cell membrane. Its subcellular location is the endoplasmic reticulum. Receptor for KLRB1 that protects target cells against natural killer cell-mediated lysis. Inhibits osteoclast formation. Inhibits bone resorption. Modulates the release of interferon-gamma. Binds high molecular weight sulfated glycosaminoglycans. The sequence is that of C-type lectin domain family 2 member D (CLEC2D) from Homo sapiens (Human).